Here is a 113-residue protein sequence, read N- to C-terminus: Mini zinc finger protein 3 (113 aa).

Residues 24–83 (YGECRRNHAASTGGHAVDGCREFIAAEDGGGGNSTGAVGVAAAALKCAACGCHRSFHRRV) form a ZF-HD dimerization-type; degenerate zinc finger. The disordered stretch occupies residues 93 to 113 (DCDSGDTSSSSPSSSSSLSSE). A compositionally biased stretch (low complexity) spans 97-113 (GDTSSSSPSSSSSLSSE).

Homo- and heterodimers.

It is found in the cytoplasm. Its function is as follows. Inhibits zinc finger homeodomain (ZHD) transcription factors, by interacting with them to prevent both their nuclear localization and their DNA-binding properties. This Oryza sativa subsp. indica (Rice) protein is Mini zinc finger protein 3 (MIF3).